The following is a 422-amino-acid chain: Phosphoribosylamine--glycine ligase (422 aa).

The ATP-grasp domain occupies 107–312; that stretch reads KDVMAAAGVR…LGQLLHAAAT (206 aa). 137–193 lines the ATP pocket; sequence GPPAGDPAWVVKDDRLAAGKGVVVTADRDVARAHGAALLEAGHPVLLESYLDGPEVS. Residues Glu-282 and Asn-284 each contribute to the Mg(2+) site.

Belongs to the GARS family. Mg(2+) serves as cofactor. It depends on Mn(2+) as a cofactor.

The enzyme catalyses 5-phospho-beta-D-ribosylamine + glycine + ATP = N(1)-(5-phospho-beta-D-ribosyl)glycinamide + ADP + phosphate + H(+). Its pathway is purine metabolism; IMP biosynthesis via de novo pathway; N(1)-(5-phospho-D-ribosyl)glycinamide from 5-phospho-alpha-D-ribose 1-diphosphate: step 2/2. This Mycobacterium bovis (strain ATCC BAA-935 / AF2122/97) protein is Phosphoribosylamine--glycine ligase.